The following is a 329-amino-acid chain: 4-hydroxythreonine-4-phosphate dehydrogenase (329 aa).

Substrate contacts are provided by H136 and T137. A divalent metal cation-binding residues include H166, H211, and H266. Substrate is bound by residues K274, N283, and R292.

This sequence belongs to the PdxA family. In terms of assembly, homodimer. It depends on Zn(2+) as a cofactor. The cofactor is Mg(2+). Co(2+) serves as cofactor.

The protein resides in the cytoplasm. It carries out the reaction 4-(phosphooxy)-L-threonine + NAD(+) = 3-amino-2-oxopropyl phosphate + CO2 + NADH. It functions in the pathway cofactor biosynthesis; pyridoxine 5'-phosphate biosynthesis; pyridoxine 5'-phosphate from D-erythrose 4-phosphate: step 4/5. Functionally, catalyzes the NAD(P)-dependent oxidation of 4-(phosphooxy)-L-threonine (HTP) into 2-amino-3-oxo-4-(phosphooxy)butyric acid which spontaneously decarboxylates to form 3-amino-2-oxopropyl phosphate (AHAP). This Pseudomonas syringae pv. tomato (strain ATCC BAA-871 / DC3000) protein is 4-hydroxythreonine-4-phosphate dehydrogenase.